A 75-amino-acid chain; its full sequence is uncharacterized protein (75 aa).

A SpoVT-AbrB domain is found at 3–45; that stretch reads TTVFLSNRSQAVRLPKAVALPENVKRVEVIAVGRTRIITPAGE.

This sequence belongs to the VapB family.

This is an uncharacterized protein from Escherichia coli (strain K12).